A 306-amino-acid chain; its full sequence is Tricarboxylate transporter FUM11 (306 aa).

Solcar repeat units lie at residues 18–98 (SDTL…YQKL), 109–195 (FGIL…LKQV), and 206–292 (IGTV…VVEG). 6 helical membrane passes run 24-44 (LVAGSVAGGLEIAITYPAEFA), 67-87 (GLQWYSGCIPFLIGNSVKTSI), 113-133 (LAGFGAGATESLLAVTPSERI), 170-189 (GFWPTTARQSAGSAIRLGSY), 209-229 (VKTFIIGSLAGLITVYLTQPL), and 267-286 (GAVARSLRLVMSGGIVFMVY).

The protein belongs to the mitochondrial carrier (TC 2.A.29) family.

It is found in the mitochondrion inner membrane. It participates in mycotoxin biosynthesis. In terms of biological role, tricarboxylate transporter; part of the gene cluster that mediates the biosynthesis of fumonisins B1 (FB1), B2 (FB2), B3 (FB3), and B4 (FB4), which are carcinogenic mycotoxins. Within the pathway, FUM11 is involved the addition of the tricarballylic moieties to the carbon backbone. FUM11 makes a tricarboxylic acid precursor available for fumonisin biosynthesis via its export from the mitochondria. The biosynthesis starts with the FUM1-catalyzed carbon chain assembly from one molecule of acetyl-CoA, eight molecules of malonyl-CoA, and two molecules of methionine (in S-adenosyl form). The C18 polyketide chain is released from the enzyme by a nucleophilic attack of a carbanion, which is derived from R-carbon of alanine by decarboxylation, on the carbonyl carbon of polyketide acyl chain. This step is catalyzed by the pyridoxal 5'-phosphate-dependent aminoacyl transferase FUM8. The resultant 3-keto intermediate is then stereospecifically reduced to a 3-hydroxyl product by reductase FUM13. Subsequent oxidations at C-10 by the cytochrome P450 monooxygenase FUM2, C-14 and C-15 by FUM6, FUM12 or FUM15, tricarballylic esterification of the hydroxyl groups on C-14 and C-15 by acyltransferase FUM14, and C-5 hydroxylation by 2-keto-glutarate-dependent dioxygenase FUM3 furnish the biosynthesis of fumonisins. The tricarballylic moieties are most likely derived from the citric acid cycle, and their addition to the carbon backbone may involve FUM7, FUM10, FUM11 and FUM14. The protein is Tricarboxylate transporter FUM11 of Gibberella moniliformis (strain M3125 / FGSC 7600) (Maize ear and stalk rot fungus).